The sequence spans 265 residues: Probable protein VP2 (265 aa).

Disordered stretches follow at residues 44 to 110 (RLGR…DDLS), 152 to 171 (STRS…SDVA), and 194 to 265 (VQNA…CSSN). Over residues 48 to 60 (PQPPRPPGGPPGP) the composition is skewed to pro residues. A compositionally biased stretch (low complexity) spans 152 to 168 (STRSTSTRASRSTDGTS). Positions 221 to 242 (GKTRPRKKPRAKQKPKKRRRYR) are enriched in basic residues. Residues 243-265 (SSSNSSSKSNDSSDAESSTCSSN) show a composition bias toward low complexity.

Phosphorylated at C-terminal serines.

The protein is Probable protein VP2 of Torque teno virus (isolate Human/Germany/KAV/2001) (TTV).